The following is an 89-amino-acid chain: Large ribosomal subunit protein bL28 (89 aa).

This sequence belongs to the bacterial ribosomal protein bL28 family.

This is Large ribosomal subunit protein bL28 from Chlamydia trachomatis serovar L2 (strain ATCC VR-902B / DSM 19102 / 434/Bu).